Here is a 225-residue protein sequence, read N- to C-terminus: UPF0758 protein XCV4028 (225 aa).

The 123-residue stretch at 102–224 folds into the MPN domain; the sequence is ALSDPPSVGR…PVSFAERGWL (123 aa). The Zn(2+) site is built by His173, His175, and Asp186. Residues 173–186 carry the JAMM motif motif; it reads HNHPSGNPEPSEAD.

Belongs to the UPF0758 family.

This Xanthomonas euvesicatoria pv. vesicatoria (strain 85-10) (Xanthomonas campestris pv. vesicatoria) protein is UPF0758 protein XCV4028.